The chain runs to 206 residues: Small ribosomal subunit protein uS4c (206 aa).

The region spanning methionine 94–asparagine 152 is the S4 RNA-binding domain.

The protein belongs to the universal ribosomal protein uS4 family. In terms of assembly, part of the 30S ribosomal subunit. Contacts protein S5. The interaction surface between S4 and S5 is involved in control of translational fidelity.

Its subcellular location is the plastid. It is found in the chloroplast. One of the primary rRNA binding proteins, it binds directly to 16S rRNA where it nucleates assembly of the body of the 30S subunit. Its function is as follows. With S5 and S12 plays an important role in translational accuracy. In Chara vulgaris (Common stonewort), this protein is Small ribosomal subunit protein uS4c (rps4).